Here is a 411-residue protein sequence, read N- to C-terminus: 2,3-bisphosphoglycerate-independent phosphoglycerate mutase (411 aa).

The protein belongs to the BPG-independent phosphoglycerate mutase family. A-PGAM subfamily.

The enzyme catalyses (2R)-2-phosphoglycerate = (2R)-3-phosphoglycerate. The protein operates within carbohydrate degradation; glycolysis; pyruvate from D-glyceraldehyde 3-phosphate: step 3/5. Its function is as follows. Catalyzes the interconversion of 2-phosphoglycerate and 3-phosphoglycerate. The protein is 2,3-bisphosphoglycerate-independent phosphoglycerate mutase of Methanosphaerula palustris (strain ATCC BAA-1556 / DSM 19958 / E1-9c).